Consider the following 119-residue polypeptide: Large ribosomal subunit protein uL18 (119 aa).

It belongs to the universal ribosomal protein uL18 family. In terms of assembly, part of the 50S ribosomal subunit; part of the 5S rRNA/L5/L18/L25 subcomplex. Contacts the 5S and 23S rRNAs.

Its function is as follows. This is one of the proteins that bind and probably mediate the attachment of the 5S RNA into the large ribosomal subunit, where it forms part of the central protuberance. The polypeptide is Large ribosomal subunit protein uL18 (Borrelia recurrentis (strain A1)).